We begin with the raw amino-acid sequence, 167 residues long: uncharacterized protein (167 aa).

2 helical membrane passes run 96 to 115 and 119 to 138; these read YVPA…FNFY and WGAL…IIAV.

The protein localises to the cell membrane. This is an uncharacterized protein from Bacillus subtilis (strain 168).